Reading from the N-terminus, the 330-residue chain is Delta-aminolevulinic acid dehydratase (330 aa).

Zn(2+) is bound by residues C122, C124, H131, and C132. Catalysis depends on K199, which acts as the Schiff-base intermediate with substrate. K199 carries the N6-succinyllysine modification. R209 is a binding site for 5-aminolevulinate. S215 is modified (phosphoserine). R221 is a binding site for 5-aminolevulinate. C223 contacts Zn(2+). Catalysis depends on K252, which acts as the Schiff-base intermediate with substrate. The residue at position 252 (K252) is an N6-succinyllysine. 5-aminolevulinate contacts are provided by S279 and Y318.

The protein belongs to the ALAD family. In terms of assembly, homooctamer; active form. Homohexamer; low activity form. Requires Zn(2+) as cofactor.

The protein localises to the cytoplasm. It localises to the cytosol. The catalysed reaction is 2 5-aminolevulinate = porphobilinogen + 2 H2O + H(+). It participates in porphyrin-containing compound metabolism; protoporphyrin-IX biosynthesis; coproporphyrinogen-III from 5-aminolevulinate: step 1/4. Its activity is regulated as follows. Can alternate between a fully active homooctamer and a low-activity homohexamer. A bound magnesium ion may promote the assembly of the fully active homooctamer. The magnesium-binding site is absent in the low-activity homohexamer. Inhibited by compounds that favor the hexameric state. Inhibited by divalent lead ions. The lead ions partially displace the zinc cofactor. In terms of biological role, catalyzes an early step in the biosynthesis of tetrapyrroles. Binds two molecules of 5-aminolevulinate per subunit, each at a distinct site, and catalyzes their condensation to form porphobilinogen. This Rattus norvegicus (Rat) protein is Delta-aminolevulinic acid dehydratase (Alad).